A 188-amino-acid polypeptide reads, in one-letter code: UPF0461 protein C5orf24 homolog (188 aa).

A Phosphoserine modification is found at S37. K75 participates in a covalent cross-link: Glycyl lysine isopeptide (Lys-Gly) (interchain with G-Cter in SUMO2). Residues 79–142 form a disordered region; that stretch reads KKKKNLNRSG…GYKVSPGRPP (64 aa). Residues 80–92 show a composition bias toward basic residues; it reads KKKNLNRSGKRGR. Positions 94 to 107 are enriched in polar residues; it reads SGTTKSAGYRTSTG. Residues S121 and S180 each carry the phosphoserine modification. K184 participates in a covalent cross-link: Glycyl lysine isopeptide (Lys-Gly) (interchain with G-Cter in SUMO2).

Belongs to the UPF0461 family.

In Bos taurus (Bovine), this protein is UPF0461 protein C5orf24 homolog.